Consider the following 347-residue polypeptide: Holliday junction branch migration complex subunit RuvB (347 aa).

Polar residues predominate over residues 1-10 (MAIVSSSSGR). Positions 1 to 29 (MAIVSSSSGRKSPCRETALVDPQPAPEEQ) are disordered. A large ATPase domain (RuvB-L) region spans residues 13-198 (PCRETALVDP…FGLIQRLEFY (186 aa)). ATP contacts are provided by leucine 37, arginine 38, glycine 79, lysine 82, threonine 83, threonine 84, arginine 188, tyrosine 198, and arginine 235. Residue threonine 83 participates in Mg(2+) binding. Residues 199-270 (GQTDLEAIVA…MVAEALSLHR (72 aa)) form a small ATPAse domain (RuvB-S) region. The segment at 273–347 (HRGLDASDRR…AARSHIAEAA (75 aa)) is head domain (RuvB-H). Residues arginine 328 and arginine 333 each coordinate DNA.

Belongs to the RuvB family. In terms of assembly, homohexamer. Forms an RuvA(8)-RuvB(12)-Holliday junction (HJ) complex. HJ DNA is sandwiched between 2 RuvA tetramers; dsDNA enters through RuvA and exits via RuvB. An RuvB hexamer assembles on each DNA strand where it exits the tetramer. Each RuvB hexamer is contacted by two RuvA subunits (via domain III) on 2 adjacent RuvB subunits; this complex drives branch migration. In the full resolvosome a probable DNA-RuvA(4)-RuvB(12)-RuvC(2) complex forms which resolves the HJ.

Its subcellular location is the cytoplasm. The enzyme catalyses ATP + H2O = ADP + phosphate + H(+). Its function is as follows. The RuvA-RuvB-RuvC complex processes Holliday junction (HJ) DNA during genetic recombination and DNA repair, while the RuvA-RuvB complex plays an important role in the rescue of blocked DNA replication forks via replication fork reversal (RFR). RuvA specifically binds to HJ cruciform DNA, conferring on it an open structure. The RuvB hexamer acts as an ATP-dependent pump, pulling dsDNA into and through the RuvAB complex. RuvB forms 2 homohexamers on either side of HJ DNA bound by 1 or 2 RuvA tetramers; 4 subunits per hexamer contact DNA at a time. Coordinated motions by a converter formed by DNA-disengaged RuvB subunits stimulates ATP hydrolysis and nucleotide exchange. Immobilization of the converter enables RuvB to convert the ATP-contained energy into a lever motion, pulling 2 nucleotides of DNA out of the RuvA tetramer per ATP hydrolyzed, thus driving DNA branch migration. The RuvB motors rotate together with the DNA substrate, which together with the progressing nucleotide cycle form the mechanistic basis for DNA recombination by continuous HJ branch migration. Branch migration allows RuvC to scan DNA until it finds its consensus sequence, where it cleaves and resolves cruciform DNA. The protein is Holliday junction branch migration complex subunit RuvB of Synechococcus sp. (strain CC9902).